Consider the following 322-residue polypeptide: Undecaprenyl-phosphate 4-deoxy-4-formamido-L-arabinose transferase (322 aa).

The Cytoplasmic portion of the chain corresponds to 1 to 235; it reads MFEIHPVKKV…TCLTTTPLRM (235 aa). A helical transmembrane segment spans residues 236–256; sequence LSLLGSIIAIGGFSIAVLLVI. Residues 257–269 are Periplasmic-facing; the sequence is LRLTFGPQWAAEG. The helical transmembrane segment at 270-290 threads the bilayer; sequence VFMLFAVLFTFIGAQFIGMGL. The Cytoplasmic portion of the chain corresponds to 291-322; the sequence is LGEYIGRIYTDVRARPRYFVQQVIRPSSKENE.

This sequence belongs to the glycosyltransferase 2 family.

The protein resides in the cell inner membrane. It carries out the reaction UDP-4-deoxy-4-formamido-beta-L-arabinose + di-trans,octa-cis-undecaprenyl phosphate = 4-deoxy-4-formamido-alpha-L-arabinopyranosyl di-trans,octa-cis-undecaprenyl phosphate + UDP. It participates in glycolipid biosynthesis; 4-amino-4-deoxy-alpha-L-arabinose undecaprenyl phosphate biosynthesis; 4-amino-4-deoxy-alpha-L-arabinose undecaprenyl phosphate from UDP-4-deoxy-4-formamido-beta-L-arabinose and undecaprenyl phosphate: step 1/2. It functions in the pathway bacterial outer membrane biogenesis; lipopolysaccharide biosynthesis. Functionally, catalyzes the transfer of 4-deoxy-4-formamido-L-arabinose from UDP to undecaprenyl phosphate. The modified arabinose is attached to lipid A and is required for resistance to polymyxin and cationic antimicrobial peptides. This is Undecaprenyl-phosphate 4-deoxy-4-formamido-L-arabinose transferase from Escherichia coli (strain SMS-3-5 / SECEC).